A 429-amino-acid chain; its full sequence is Endo-beta-1,4-galactanase (429 aa).

The N-terminal stretch at 1–21 is a signal peptide; the sequence is MKSKVKMFFAAAIVWSACSST. 146–149 lines the substrate pocket; the sequence is DPAK. Residue Glu-194 is the Proton donor of the active site. Substrate is bound by residues 233–234 and His-267; that span reads TN. Glu-292 functions as the Nucleophile in the catalytic mechanism. Thr-296 is a substrate binding site. Ca(2+) is bound by residues Asp-301, Asp-303, His-305, and Asn-307. Substrate-binding residues include Lys-311 and Asp-388. Residues Ser-396 and Asp-399 each coordinate Ca(2+).

This sequence belongs to the glycosyl hydrolase 53 family. It depends on Ca(2+) as a cofactor.

It localises to the secreted. The catalysed reaction is The enzyme specifically hydrolyzes (1-&gt;4)-beta-D-galactosidic linkages in type I arabinogalactans.. Functionally, involved in galactan degradation. Degrades arabinose-free galactan to galactooligosaccharides, producing galactotetraose as the main product along with galactotriose, galactobiose, and galactose. Is also able to degrade galactotetraose, galactotriose and galactobiose, suggesting an additional exo-mode of activity. May hydrolyze the beta-1,4-galactan linkages of the galactan portion of arabinogalactan type I, a pectic plant polysaccharide from which most of the arabinose has been removed. This chain is Endo-beta-1,4-galactanase, found in Bacillus subtilis (strain 168).